Here is a 209-residue protein sequence, read N- to C-terminus: Ribosomal RNA large subunit methyltransferase E (209 aa).

The S-adenosyl-L-methionine site is built by G60, W62, D80, D96, and D121. Catalysis depends on K161, which acts as the Proton acceptor.

The protein belongs to the class I-like SAM-binding methyltransferase superfamily. RNA methyltransferase RlmE family.

It is found in the cytoplasm. It carries out the reaction uridine(2552) in 23S rRNA + S-adenosyl-L-methionine = 2'-O-methyluridine(2552) in 23S rRNA + S-adenosyl-L-homocysteine + H(+). Specifically methylates the uridine in position 2552 of 23S rRNA at the 2'-O position of the ribose in the fully assembled 50S ribosomal subunit. This is Ribosomal RNA large subunit methyltransferase E from Pseudomonas fluorescens (strain Pf0-1).